A 394-amino-acid polypeptide reads, in one-letter code: Elongation factor Tu (394 aa).

Residues 10–205 form the tr-type G domain; it reads KPHVNIGTIG…VDTWIPLPPR (196 aa). Residues 19–26 form a G1 region; it reads GHVDHGKT. 19–26 contacts GTP; sequence GHVDHGKT. T26 provides a ligand contact to Mg(2+). Positions 60–64 are G2; it reads GITIN. The interval 81–84 is G3; it reads DCPG. GTP contacts are provided by residues 81–85 and 136–139; these read DCPGH and NKCD. Residues 136-139 form a G4 region; sequence NKCD. Positions 174–176 are G5; that stretch reads SAL.

Belongs to the TRAFAC class translation factor GTPase superfamily. Classic translation factor GTPase family. EF-Tu/EF-1A subfamily. Monomer.

Its subcellular location is the cytoplasm. It carries out the reaction GTP + H2O = GDP + phosphate + H(+). GTP hydrolase that promotes the GTP-dependent binding of aminoacyl-tRNA to the A-site of ribosomes during protein biosynthesis. The chain is Elongation factor Tu from Bacteroides fragilis (strain ATCC 25285 / DSM 2151 / CCUG 4856 / JCM 11019 / LMG 10263 / NCTC 9343 / Onslow / VPI 2553 / EN-2).